Here is a 228-residue protein sequence, read N- to C-terminus: Thymidylate kinase (228 aa).

Over residues 1 to 10 (MSDSAVQRSS) the composition is skewed to polar residues. A disordered region spans residues 1-23 (MSDSAVQRSSGRGRFITFEGGEG). Position 20 to 27 (20 to 27 (GGEGTGKS)) interacts with ATP.

The protein belongs to the thymidylate kinase family.

The enzyme catalyses dTMP + ATP = dTDP + ADP. In terms of biological role, phosphorylation of dTMP to form dTDP in both de novo and salvage pathways of dTTP synthesis. This Bradyrhizobium diazoefficiens (strain JCM 10833 / BCRC 13528 / IAM 13628 / NBRC 14792 / USDA 110) protein is Thymidylate kinase.